Reading from the N-terminus, the 216-residue chain is Pyrrolidone-carboxylate peptidase (216 aa).

Active-site residues include E80, C143, and H168.

It belongs to the peptidase C15 family. In terms of assembly, homotetramer.

The protein resides in the cytoplasm. It catalyses the reaction Release of an N-terminal pyroglutamyl group from a polypeptide, the second amino acid generally not being Pro.. Its function is as follows. Removes 5-oxoproline from various penultimate amino acid residues except L-proline. The sequence is that of Pyrrolidone-carboxylate peptidase from Cupriavidus taiwanensis (strain DSM 17343 / BCRC 17206 / CCUG 44338 / CIP 107171 / LMG 19424 / R1) (Ralstonia taiwanensis (strain LMG 19424)).